Here is a 383-residue protein sequence, read N- to C-terminus: MGLRVAQTGFVALVLLQSCAAYKLVCYYTSWSQYREGDGSCFPDAIDPFLCTHIIYSFANISNNEIDTWEWNDVTLYDTLNTLKNRNPNLKTLLSVGGWNFGSQRFSKIASKTQSRRTFIKSVPPFLRTHGFDGLDLAWLYPGRRDKRHLTTLVKEMKAEFIREAQAGTEQLLLSAAVSAGKVAIDRGYDIAQISQHLDFISLLTYDFHGAWRQTTGHHSPLFRGQEDASSDRFSNADYAVSYVLRLGAPANKLVMGIPTFGRSFTLASSKTDVGAPVSGPGIPGRFTKEKGILAYYEICDFLQGATTHRFRDQQVPYATKGNQWVGYDDQESVKNKAKYLKSRQLAGAMVWALDLDDFRGNFCGQNLRFPLTSAIKDVLAAA.

The N-terminal stretch at methionine 1 to alanine 21 is a signal peptide. Residues tyrosine 22 to alanine 383 enclose the GH18 domain. Cysteines 26 and 51 form a disulfide. N-linked (GlcNAc...) asparagine glycosylation is present at asparagine 60. Chitin is bound by residues glutamate 70–tryptophan 71, glycine 97–asparagine 100, tyrosine 141, leucine 204–aspartate 207, and arginine 263. A disulfide bridge connects residues cysteine 300 and cysteine 364. The segment at glutamine 324–alanine 338 is important for AKT1 activation and IL8 production. Residue tryptophan 352 participates in chitin binding.

The protein belongs to the glycosyl hydrolase 18 family. As to quaternary structure, monomer. Detected in smooth muscle cells in atherosclerotic plaques. Detected in regions of vascular occlusion in the aorta.

Its subcellular location is the secreted. The protein localises to the extracellular space. It localises to the cytoplasm. The protein resides in the perinuclear region. It is found in the endoplasmic reticulum. Functionally, carbohydrate-binding lectin with a preference for chitin. Has no chitinase activity. May play a role in tissue remodeling and in the capacity of cells to respond to and cope with changes in their environment. Plays a role in T-helper cell type 2 (Th2) inflammatory response and IL-13-induced inflammation, regulating allergen sensitization, inflammatory cell apoptosis, dendritic cell accumulation and M2 macrophage differentiation. Facilitates invasion of pathogenic enteric bacteria into colonic mucosa and lymphoid organs. Mediates activation of AKT1 signaling pathway and subsequent IL8 production in colonic epithelial cells. Regulates antibacterial responses in lung by contributing to macrophage bacterial killing, controlling bacterial dissemination and augmenting host tolerance. Also regulates hyperoxia-induced injury, inflammation and epithelial apoptosis in lung. Stimulates migration and adhesion of cultured vascular smooth muscle cells. The polypeptide is Chitinase-3-like protein 1 (CHI3L1) (Sus scrofa (Pig)).